We begin with the raw amino-acid sequence, 429 residues long: Enolase (429 aa).

Residue Gln163 participates in (2R)-2-phosphoglycerate binding. The active-site Proton donor is Glu205. Positions 242, 287, and 314 each coordinate Mg(2+). (2R)-2-phosphoglycerate is bound by residues Lys339, Arg368, Ser369, and Lys390. Catalysis depends on Lys339, which acts as the Proton acceptor.

This sequence belongs to the enolase family. Homooctamer. The cofactor is Mg(2+).

It is found in the cytoplasm. The protein resides in the secreted. It localises to the cell surface. The catalysed reaction is (2R)-2-phosphoglycerate = phosphoenolpyruvate + H2O. Its pathway is carbohydrate degradation; glycolysis; pyruvate from D-glyceraldehyde 3-phosphate: step 4/5. Functionally, catalyzes the reversible conversion of 2-phosphoglycerate (2-PG) into phosphoenolpyruvate (PEP). It is essential for the degradation of carbohydrates via glycolysis. This is Enolase from Zymomonas mobilis subsp. mobilis (strain ATCC 31821 / ZM4 / CP4).